A 76-amino-acid chain; its full sequence is Protein OPG128 (76 aa).

Cys-17 and Cys-21 are oxidised to a cystine.

Belongs to the orthopoxvirus OPG128 family. In terms of assembly, interacts with sulfhydryl oxidase OPG072; this interaction involves formation of a transient disulfide-bonded intermediate, allowing disulfide bond transfer. Interacts with OPG088; this interaction involves formation of a transient disulfide-bonded intermediate, allowing disulfide bond transfer.

Functionally, late protein which probably participates in disulfide bond formation by functioning as a thiol-disulfide transfer protein between membrane-associated OPG072 and OPG08. The complete pathway for formation of disulfide bonds in intracellular virion membrane proteins sequentially involves oxidation of OPG072, OPG128 and OPG08. In Variola virus (isolate Human/India/Ind3/1967) (VARV), this protein is Protein OPG128 (OPG128).